Consider the following 895-residue polypeptide: DNA mismatch repair protein MutS (895 aa).

Residue 607–614 participates in ATP binding; sequence GPNMSGKS.

This sequence belongs to the DNA mismatch repair MutS family.

Functionally, this protein is involved in the repair of mismatches in DNA. It is possible that it carries out the mismatch recognition step. This protein has a weak ATPase activity. This chain is DNA mismatch repair protein MutS, found in Bacillus cytotoxicus (strain DSM 22905 / CIP 110041 / 391-98 / NVH 391-98).